A 406-amino-acid polypeptide reads, in one-letter code: Haptoglobin (406 aa).

The signal sequence occupies residues Met-1 to Ala-18. Sushi domains follow at residues Asp-31–Ala-88 and Asp-90–Ala-147. Cystine bridges form between Cys-52–Cys-86, Cys-111–Cys-145, Cys-149–Cys-266, Cys-309–Cys-340, and Cys-351–Cys-381. Residues Ile-162–Ala-404 form the Peptidase S1 domain. N-linked (GlcNAc...) (complex) asparagine glycosylation is present at Asn-184. Asn-207 and Asn-211 each carry an N-linked (GlcNAc...) asparagine glycan. Residue Asn-241 is glycosylated (N-linked (GlcNAc...) (complex) asparagine). Positions Val-318–Thr-323 are interaction with CD163.

This sequence belongs to the peptidase S1 family. In terms of assembly, tetramer of two alpha and two beta chains; disulfide-linked. The hemoglobin/haptoglobin complex is composed of a haptoglobin dimer bound to two hemoglobin alpha-beta dimers. Interacts with CD163. Interacts with ERGIC3. In terms of tissue distribution, expressed by the liver and secreted in plasma.

The protein localises to the secreted. Its function is as follows. As a result of hemolysis, hemoglobin is found to accumulate in the kidney and is secreted in the urine. Haptoglobin captures, and combines with free plasma hemoglobin to allow hepatic recycling of heme iron and to prevent kidney damage. Haptoglobin also acts as an antioxidant, has antibacterial activity, and plays a role in modulating many aspects of the acute phase response. Hemoglobin/haptoglobin complexes are rapidly cleared by the macrophage CD163 scavenger receptor expressed on the surface of liver Kupfer cells through an endocytic lysosomal degradation pathway. Functionally, the uncleaved form of allele alpha-2 (2-2), known as zonulin, plays a role in intestinal permeability, allowing intercellular tight junction disassembly, and controlling the equilibrium between tolerance and immunity to non-self antigens. The chain is Haptoglobin (HP) from Homo sapiens (Human).